A 209-amino-acid polypeptide reads, in one-letter code: Ribosomal RNA large subunit methyltransferase E (209 aa).

Residues Gly63, Trp65, Asp83, Asp99, and Asp124 each contribute to the S-adenosyl-L-methionine site. Residue Lys164 is the Proton acceptor of the active site. Residues 191–209 (EASRGRSREVYIVATGYKG) enclose the TRAM domain.

This sequence belongs to the class I-like SAM-binding methyltransferase superfamily. RNA methyltransferase RlmE family.

It is found in the cytoplasm. It catalyses the reaction uridine(2552) in 23S rRNA + S-adenosyl-L-methionine = 2'-O-methyluridine(2552) in 23S rRNA + S-adenosyl-L-homocysteine + H(+). Functionally, specifically methylates the uridine in position 2552 of 23S rRNA at the 2'-O position of the ribose in the fully assembled 50S ribosomal subunit. The sequence is that of Ribosomal RNA large subunit methyltransferase E from Haemophilus influenzae (strain 86-028NP).